The sequence spans 159 residues: RNA pyrophosphohydrolase (159 aa).

The Nudix hydrolase domain occupies 6–149 (GFRPNVGIIL…KREVYRRALK (144 aa)). The short motif at 38 to 59 (GGINDRESPEEALYRELNEEVG) is the Nudix box element.

It belongs to the Nudix hydrolase family. RppH subfamily. A divalent metal cation serves as cofactor.

Accelerates the degradation of transcripts by removing pyrophosphate from the 5'-end of triphosphorylated RNA, leading to a more labile monophosphorylated state that can stimulate subsequent ribonuclease cleavage. The chain is RNA pyrophosphohydrolase from Ectopseudomonas mendocina (strain ymp) (Pseudomonas mendocina).